The sequence spans 307 residues: Mediator of RNA polymerase II transcription subunit 18 (307 aa).

Positions 117–126 (TNFNSTNEDQ) are enriched in polar residues. The segment at 117–162 (TNFNSTNEDQNNSKHTEDTVNESRNSDDIIDVDMDASPAPSNESCS) is disordered.

This sequence belongs to the Mediator complex subunit 18 family. Component of the Mediator complex, which is composed of at least 21 subunits that form three structurally distinct submodules. The Mediator head module contains MED6, MED8, MED11, SRB4/MED17, SRB5/MED18, ROX3/MED19, SRB2/MED20 and SRB6/MED22, the middle module contains MED1, MED4, NUT1/MED5, MED7, CSE2/MED9, NUT2/MED10, SRB7/MED21 and SOH1/MED31, and the tail module contains MED2, PGD1/MED3, RGR1/MED14, GAL11/MED15 and SIN4/MED16. The head and the middle modules interact directly with RNA polymerase II, whereas the elongated tail module interacts with gene-specific regulatory proteins. SRB5/MED18 interacts directly with MED8 and SRB2/MED20.

The protein localises to the nucleus. Its function is as follows. Component of the Mediator complex, a coactivator involved in the regulated transcription of nearly all RNA polymerase II-dependent genes. Mediator functions as a bridge to convey information from gene-specific regulatory proteins to the basal RNA polymerase II transcription machinery. The Mediator complex, having a compact conformation in its free form, is recruited to promoters by direct interactions with regulatory proteins and serves for the assembly of a functional preinitiation complex with RNA polymerase II and the general transcription factors. The Mediator complex unfolds to an extended conformation and partially surrounds RNA polymerase II, specifically interacting with the unphosphorylated form of the C-terminal domain (CTD) of RNA polymerase II. The Mediator complex dissociates from the RNA polymerase II holoenzyme and stays at the promoter when transcriptional elongation begins. The sequence is that of Mediator of RNA polymerase II transcription subunit 18 (SRB5) from Saccharomyces cerevisiae (strain ATCC 204508 / S288c) (Baker's yeast).